The chain runs to 237 residues: Uridylate kinase (237 aa).

An ATP-binding site is contributed by 9–12; that stretch reads KLSG. The involved in allosteric activation by GTP stretch occupies residues 17–22; that stretch reads GSQGYG. Gly51 contributes to the UMP binding site. ATP is bound by residues Gly52 and Arg56. Residues Asp71 and 132–139 contribute to the UMP site; that span reads CGNPFFTT. Positions 159, 165, and 168 each coordinate ATP.

It belongs to the UMP kinase family. As to quaternary structure, homohexamer.

It localises to the cytoplasm. The enzyme catalyses UMP + ATP = UDP + ADP. The protein operates within pyrimidine metabolism; CTP biosynthesis via de novo pathway; UDP from UMP (UMPK route): step 1/1. With respect to regulation, allosterically activated by GTP. Inhibited by UTP. Its function is as follows. Catalyzes the reversible phosphorylation of UMP to UDP. The chain is Uridylate kinase from Synechococcus sp. (strain CC9902).